Reading from the N-terminus, the 950-residue chain is MGLAGFARPLQWFKSQWLWLLLSIAAFWLLMRVQVEWLWFGQFDWQGMLLRRWLWQLGGLLLALLVVATCQLWQRNWIKLEGASNLAEPALPLHGWRYGLGLLGCFVVVVGDLVLLTRLAWLACFKPFALGHWWSEPFEDIWALVIPLSCVFISICVMLGNARGGRIAHLMGCFCFSISIARGWGLWSLALAIPPTGIKEPLLGADVSFGLGQFPALAFALVVLLAQLVLTTSTTIWMKLAQPESLSDWVFKGLSPRQCDVMRPLIGIILLTLSALLWLSRHELLWTQNGTVAGAGWLDAHLILPLRSLASLAILVLAFLVIPFPWIQQRRLWRLIASIIGVGAILLEVLLAPFVQWMVVKPRELKLETPYIIRAIKATRKAFQLDSITTTLINPQPQLTQLDLEQGASTLRNIRLWDSQPLLATNRQLQQLRVYYRFSNAAVDRYRFVPDKANRQQVMITARELDQAALPKRSRTWLNRHFVFTHGYGFTLSPVNTRAPDGLPDYFISDLGTSTRLEGSSELGITREDVKEAVPIGRAALYFGMLPSPYALAPSKLKELDYPVGDKNIYNHYLGSGGVPVGHPWQQLAAAMYLFEPRLLNTGSLTINSKLLIRREVRQRVSAIAPFLEVIGDPYLVSTSVNSRDHDYQAKQNQYWIVEAYTSSRTYPYAANLPDGRPVRYLRNSVKAIVDAYSGRVHLYVSEPRDPIILGWQRLFPDLFKPLEEMPSSLREHLKVPTDLFNVQVQQLLRYHVTDPRIFYSGDDVWQVPKELYGKRQVPVDPYHITAQLGSQESSEFLLLQPLTPLARPNLSAWLAARSDGDHYGKLVLLRFPSQTPIFGPEQIQALINQDPQISQQFGLWDRAGSEVVQGNLLVVPLGKALLYVEPVYLRARQGGLPTLTRVVVSDGKRIAMAEDLGEGLRALVDGSSKKAVYLNRNDLPPIKAADQSN.

Transmembrane regions (helical) follow at residues leucine 20–phenylalanine 40, tryptophan 53–tryptophan 73, leucine 102–leucine 122, isoleucine 141–asparagine 161, cysteine 173–isoleucine 193, phenylalanine 209–valine 229, cysteine 259–leucine 279, serine 308–glutamine 328, and leucine 335–valine 355.

Belongs to the UPF0182 family.

The protein resides in the cell membrane. The chain is UPF0182 protein P9303_14611 from Prochlorococcus marinus (strain MIT 9303).